The primary structure comprises 273 residues: Undecaprenyl-diphosphatase (273 aa).

Helical transmembrane passes span L7–S27, A45–W65, L89–H109, L115–A135, T152–F171, Y189–L209, A221–I241, and F253–L273.

This sequence belongs to the UppP family.

The protein localises to the cell inner membrane. The enzyme catalyses di-trans,octa-cis-undecaprenyl diphosphate + H2O = di-trans,octa-cis-undecaprenyl phosphate + phosphate + H(+). Catalyzes the dephosphorylation of undecaprenyl diphosphate (UPP). Confers resistance to bacitracin. This Erwinia tasmaniensis (strain DSM 17950 / CFBP 7177 / CIP 109463 / NCPPB 4357 / Et1/99) protein is Undecaprenyl-diphosphatase.